Reading from the N-terminus, the 141-residue chain is Large ribosomal subunit protein uL16 (141 aa).

The protein belongs to the universal ribosomal protein uL16 family. As to quaternary structure, part of the 50S ribosomal subunit.

Binds 23S rRNA and is also seen to make contacts with the A and possibly P site tRNAs. The protein is Large ribosomal subunit protein uL16 of Rhodospirillum centenum (strain ATCC 51521 / SW).